A 298-amino-acid polypeptide reads, in one-letter code: Ribosomal RNA small subunit methyltransferase A (298 aa).

6 residues coordinate S-adenosyl-L-methionine: N30, V32, G57, E78, D108, and N126.

The protein belongs to the class I-like SAM-binding methyltransferase superfamily. rRNA adenine N(6)-methyltransferase family. RsmA subfamily.

The protein localises to the cytoplasm. It carries out the reaction adenosine(1518)/adenosine(1519) in 16S rRNA + 4 S-adenosyl-L-methionine = N(6)-dimethyladenosine(1518)/N(6)-dimethyladenosine(1519) in 16S rRNA + 4 S-adenosyl-L-homocysteine + 4 H(+). Its function is as follows. Specifically dimethylates two adjacent adenosines (A1518 and A1519) in the loop of a conserved hairpin near the 3'-end of 16S rRNA in the 30S particle. May play a critical role in biogenesis of 30S subunits. The polypeptide is Ribosomal RNA small subunit methyltransferase A (Cutibacterium acnes (strain DSM 16379 / KPA171202) (Propionibacterium acnes)).